Here is a 132-residue protein sequence, read N- to C-terminus: ATP synthase epsilon chain (132 aa).

Belongs to the ATPase epsilon chain family. As to quaternary structure, F-type ATPases have 2 components, CF(1) - the catalytic core - and CF(0) - the membrane proton channel. CF(1) has five subunits: alpha(3), beta(3), gamma(1), delta(1), epsilon(1). CF(0) has three main subunits: a, b and c.

The protein resides in the cell membrane. Functionally, produces ATP from ADP in the presence of a proton gradient across the membrane. The protein is ATP synthase epsilon chain of Desulfitobacterium hafniense (strain Y51).